The following is a 505-amino-acid chain: Lysine--tRNA ligase (505 aa).

Residues Glu403 and Glu410 each contribute to the Mg(2+) site.

The protein belongs to the class-II aminoacyl-tRNA synthetase family. Homodimer. The cofactor is Mg(2+).

It localises to the cytoplasm. It catalyses the reaction tRNA(Lys) + L-lysine + ATP = L-lysyl-tRNA(Lys) + AMP + diphosphate. This is Lysine--tRNA ligase from Methanospirillum hungatei JF-1 (strain ATCC 27890 / DSM 864 / NBRC 100397 / JF-1).